A 332-amino-acid polypeptide reads, in one-letter code: Protoheme IX farnesyltransferase (332 aa).

7 helical membrane passes run leucine 63–leucine 83, threonine 109–valine 129, leucine 132–leucine 152, isoleucine 160–glycine 180, tryptophan 188–leucine 208, isoleucine 245–phenylalanine 265, and alanine 286–isoleucine 306.

It belongs to the UbiA prenyltransferase family. Protoheme IX farnesyltransferase subfamily.

It localises to the cell inner membrane. The catalysed reaction is heme b + (2E,6E)-farnesyl diphosphate + H2O = Fe(II)-heme o + diphosphate. The protein operates within porphyrin-containing compound metabolism; heme O biosynthesis; heme O from protoheme: step 1/1. Functionally, converts heme B (protoheme IX) to heme O by substitution of the vinyl group on carbon 2 of heme B porphyrin ring with a hydroxyethyl farnesyl side group. This is Protoheme IX farnesyltransferase from Prochlorococcus marinus (strain MIT 9515).